A 129-amino-acid polypeptide reads, in one-letter code: Large ribosomal subunit protein bL17 (129 aa).

Belongs to the bacterial ribosomal protein bL17 family. As to quaternary structure, part of the 50S ribosomal subunit. Contacts protein L32.

This Stutzerimonas stutzeri (strain A1501) (Pseudomonas stutzeri) protein is Large ribosomal subunit protein bL17.